The following is a 185-amino-acid chain: MSHSHRDALFQWMKTYVYRHSETPFRLASGLESQHYFNCKEITLHPERLSILAECFIEEIIPKLNIEFQAVGGLTLGADPIAYAISLGYQKRGKNVFPLVVRKESKGHGTGQQIEGFWKDIKTCLVVDDVITTGGSTLKAVKVLREVGINVTKGICILDREEGGSENLQTENVTMTSIFAKSEFF.

5-phospho-alpha-D-ribose 1-diphosphate-binding positions include Arg-102, Lys-103, Lys-106, His-108, and 128–136 (DDVITTGGS). Thr-132 and Arg-160 together coordinate orotate.

It belongs to the purine/pyrimidine phosphoribosyltransferase family. PyrE subfamily. Homodimer. The cofactor is Mg(2+).

It catalyses the reaction orotidine 5'-phosphate + diphosphate = orotate + 5-phospho-alpha-D-ribose 1-diphosphate. It participates in pyrimidine metabolism; UMP biosynthesis via de novo pathway; UMP from orotate: step 1/2. Functionally, catalyzes the transfer of a ribosyl phosphate group from 5-phosphoribose 1-diphosphate to orotate, leading to the formation of orotidine monophosphate (OMP). This chain is Orotate phosphoribosyltransferase, found in Leptospira biflexa serovar Patoc (strain Patoc 1 / Ames).